Here is a 38-residue protein sequence, read N- to C-terminus: Photosystem II reaction center protein M (38 aa).

A helical transmembrane segment spans residues 5 to 25 (ILGLIATALFIVIPTSFLLIL).

Belongs to the PsbM family. In terms of assembly, PSII is composed of 1 copy each of membrane proteins PsbA, PsbB, PsbC, PsbD, PsbE, PsbF, PsbH, PsbI, PsbJ, PsbK, PsbL, PsbM, PsbT, PsbX, PsbY, PsbZ, Psb30/Ycf12, at least 3 peripheral proteins of the oxygen-evolving complex and a large number of cofactors. It forms dimeric complexes.

It is found in the plastid. The protein localises to the cyanelle thylakoid membrane. One of the components of the core complex of photosystem II (PSII). PSII is a light-driven water:plastoquinone oxidoreductase that uses light energy to abstract electrons from H(2)O, generating O(2) and a proton gradient subsequently used for ATP formation. It consists of a core antenna complex that captures photons, and an electron transfer chain that converts photonic excitation into a charge separation. This subunit is found at the monomer-monomer interface. The sequence is that of Photosystem II reaction center protein M from Cyanophora paradoxa.